Reading from the N-terminus, the 125-residue chain is Large ribosomal subunit protein bL12 (125 aa).

This sequence belongs to the bacterial ribosomal protein bL12 family. As to quaternary structure, homodimer. Part of the ribosomal stalk of the 50S ribosomal subunit. Forms a multimeric L10(L12)X complex, where L10 forms an elongated spine to which 2 to 4 L12 dimers bind in a sequential fashion. Binds GTP-bound translation factors.

Functionally, forms part of the ribosomal stalk which helps the ribosome interact with GTP-bound translation factors. Is thus essential for accurate translation. This is Large ribosomal subunit protein bL12 from Polaromonas naphthalenivorans (strain CJ2).